A 360-amino-acid polypeptide reads, in one-letter code: Phospho-N-acetylmuramoyl-pentapeptide-transferase (360 aa).

Transmembrane regions (helical) follow at residues 27-47, 70-90, 98-118, 134-154, 168-188, 199-219, 239-259, 263-283, 288-308, and 337-357; these read GALF…ISLL, GTPT…ILLW, VWVT…DDYL, LLLE…YSPA, ALLN…VGAG, GLAI…AYLV, LAVV…FNAP, IFMG…IAVA, IVLA…IIQV, and QVVI…LATL.

It belongs to the glycosyltransferase 4 family. MraY subfamily. The cofactor is Mg(2+).

It is found in the cell inner membrane. The enzyme catalyses UDP-N-acetyl-alpha-D-muramoyl-L-alanyl-gamma-D-glutamyl-meso-2,6-diaminopimeloyl-D-alanyl-D-alanine + di-trans,octa-cis-undecaprenyl phosphate = di-trans,octa-cis-undecaprenyl diphospho-N-acetyl-alpha-D-muramoyl-L-alanyl-D-glutamyl-meso-2,6-diaminopimeloyl-D-alanyl-D-alanine + UMP. It functions in the pathway cell wall biogenesis; peptidoglycan biosynthesis. Its function is as follows. Catalyzes the initial step of the lipid cycle reactions in the biosynthesis of the cell wall peptidoglycan: transfers peptidoglycan precursor phospho-MurNAc-pentapeptide from UDP-MurNAc-pentapeptide onto the lipid carrier undecaprenyl phosphate, yielding undecaprenyl-pyrophosphoryl-MurNAc-pentapeptide, known as lipid I. The chain is Phospho-N-acetylmuramoyl-pentapeptide-transferase from Methylorubrum populi (strain ATCC BAA-705 / NCIMB 13946 / BJ001) (Methylobacterium populi).